The chain runs to 60 residues: Probable tautomerase SAG1079 (60 aa).

P2 functions as the Proton acceptor; via imino nitrogen in the catalytic mechanism.

This sequence belongs to the 4-oxalocrotonate tautomerase family.

The polypeptide is Probable tautomerase SAG1079 (Streptococcus agalactiae serotype V (strain ATCC BAA-611 / 2603 V/R)).